We begin with the raw amino-acid sequence, 382 residues long: Serine/threonine-protein kinase US3 homolog (382 aa).

Over residues 1–10 the composition is skewed to basic and acidic residues; sequence MENKQCDHLT. Residues 1–75 are disordered; it reads MENKQCDHLT…ASESDEDDDD (75 aa). The span at 12–24 shows a compositional bias: polar residues; sequence WFSTTSDASESMD. Over residues 45–75 the composition is skewed to acidic residues; it reads ADEDLYSDISEGDLEYSDCDSASESDEDDDD. The Protein kinase domain occupies 93–379; the sequence is YTVIKTLTPG…AEELLSYPMF (287 aa). Residues 99 to 107 and lysine 122 each bind ATP; that span reads LTPGSEGRV. Aspartate 207 acts as the Proton acceptor in catalysis.

The protein belongs to the protein kinase superfamily. Ser/Thr protein kinase family. Phosphorylated by protein 49; this phosphorylation regulates subsequent phosphorylation of proteins 26 and 29 by US3 homolog. Autophosphorylated.

The protein resides in the host cytoplasm. Its subcellular location is the host nucleus. It carries out the reaction L-seryl-[protein] + ATP = O-phospho-L-seryl-[protein] + ADP + H(+). The enzyme catalyses L-threonyl-[protein] + ATP = O-phospho-L-threonyl-[protein] + ADP + H(+). Multifunctional serine/threonine kinase that plays a role in several processes including egress of virus particles from the nucleus, modulation of the actin cytoskeleton and inhibition of apoptosis. Phosphorylates protein 26 and 29, two critical regulators of capsid budding from nucleus to endoplasmic reticulum, thereby facilitating virion egress. Modulates and redistributes host components of the nuclear envelope, including LMNA, emerin/EMD and the nuclear matrix protein MATR3. Phosphorylates envelope glycoprotein B (gB), probably to direct it to the cell surface. Promotes virus intracellular spread by restructuring host cell cytoskeleton. Blocks host apoptosis to extend cell survival and allow efficient viral replication. Promotes viral gene expression by phosphorylating host HDAC2 to reduce viral genome silencing. This is Serine/threonine-protein kinase US3 homolog from Equine herpesvirus 1 (strain Ab4p) (EHV-1).